The sequence spans 558 residues: uncharacterized protein (558 aa).

5 consecutive transmembrane segments (helical) span residues 15–32 (PSVT…ALGL), 39–61 (IGTI…HFGV), 76–95 (LVIF…FPSL), 104–126 (LISL…ILGI), and 166–188 (MALA…LALL). RCK C-terminal domains lie at 196–278 (EERD…LFGK) and 286–370 (RPDI…ILGD). 5 consecutive transmembrane segments (helical) span residues 383 to 405 (LFGG…GVSM), 409 to 426 (LGLA…GAFG), 446 to 468 (FGII…DTII), 473 to 495 (LLWV…WASI), and 533 to 555 (VVYA…IMIL).

This sequence belongs to the AAE transporter (TC 2.A.81) family.

Its subcellular location is the cell membrane. This is an uncharacterized protein from Porphyromonas gingivalis (strain ATCC BAA-308 / W83).